We begin with the raw amino-acid sequence, 90 residues long: UPF0184 protein (90 aa).

A coiled-coil region spans residues 16-78 (DETKEEMVEL…QSLETEQNTE (63 aa)). Residues 57–90 (SQQARQELQAERQSLETEQNTEPSTKSDQEQKKQ) form a disordered region. Basic and acidic residues predominate over residues 81-90 (TKSDQEQKKQ).

The protein belongs to the UPF0184 (EST00098) family.

The protein is UPF0184 protein of Branchiostoma floridae (Florida lancelet).